A 384-amino-acid polypeptide reads, in one-letter code: MDAATLTYDTLRFADTPDFPETAEPVWVLGRKYSALTEKEQLLNDITSRLWFTYRRNFQAIGGTGPTSDTGWGCMLRCGQMIFAQALICRHVGRDWRWDKQKPKGEYLNILTAFLDKKDSYYSIHQIAQMGVGEGKYIGQWYGPNTVAQVLRKLAVFDQWSSIAVHIAMDNTVVVDEIRRLCRAGSGESSDAGALSNGYTGDSDPSCAQWKPLVLLIPLRLGLSEINEAYIETLKHCFMVPQSLGVIGGRPNSAHYFIGYVGDELIYLDPHTTQLSVEPSDCSFIEDESFHCQHPPCRMHVSEIDPSIAVGFFCSSQEDFEDWCQHIKKLSLSGGALPMFEVVDQLPLHLSNPDVLNLTPDSSDADRLDRFFDSEDEEFEILSL.

The Nucleophile role is filled by Cys74. Catalysis depends on residues Asp269 and His271. An LIR motif is present at residues 379-382 (FEIL).

This sequence belongs to the peptidase C54 family.

The protein localises to the cytoplasm. It is found in the cytosol. It localises to the cytoplasmic vesicle. Its subcellular location is the autophagosome. The protein resides in the endoplasmic reticulum. The protein localises to the mitochondrion. The catalysed reaction is [protein]-C-terminal L-amino acid-glycyl-phosphatidylethanolamide + H2O = [protein]-C-terminal L-amino acid-glycine + a 1,2-diacyl-sn-glycero-3-phosphoethanolamine. It catalyses the reaction [protein]-C-terminal L-amino acid-glycyl-phosphatidylserine + H2O = [protein]-C-terminal L-amino acid-glycine + a 1,2-diacyl-sn-glycero-3-phospho-L-serine. Cysteine protease that plays a key role in autophagy by mediating both proteolytic activation and delipidation of ATG8 family proteins. Required for canonical autophagy (macroautophagy), non-canonical autophagy as well as for mitophagy. The protease activity is required for proteolytic activation of ATG8 family proteins: cleaves the C-terminal amino acid of ATG8 proteins to reveal a C-terminal glycine. Exposure of the glycine at the C-terminus is essential for ATG8 proteins conjugation to phosphatidylethanolamine (PE) and insertion to membranes, which is necessary for autophagy. Protease activity is also required to counteract formation of high-molecular weight conjugates of ATG8 proteins (ATG8ylation): acts as a deubiquitinating-like enzyme that removes ATG8 conjugated to other proteins, such as ATG3. In addition to the protease activity, also mediates delipidation of ATG8 family proteins. Catalyzes delipidation of PE-conjugated forms of ATG8 proteins during macroautophagy. Also involved in non-canonical autophagy, a parallel pathway involving conjugation of ATG8 proteins to single membranes at endolysosomal compartments, by catalyzing delipidation of ATG8 proteins conjugated to phosphatidylserine (PS). In Xenopus laevis (African clawed frog), this protein is Cysteine protease ATG4B.